The sequence spans 502 residues: ATP synthase subunit alpha (502 aa).

169–176 (GDRQTGKT) lines the ATP pocket.

It belongs to the ATPase alpha/beta chains family. F-type ATPases have 2 components, CF(1) - the catalytic core - and CF(0) - the membrane proton channel. CF(1) has five subunits: alpha(3), beta(3), gamma(1), delta(1), epsilon(1). CF(0) has three main subunits: a(1), b(2) and c(9-12). The alpha and beta chains form an alternating ring which encloses part of the gamma chain. CF(1) is attached to CF(0) by a central stalk formed by the gamma and epsilon chains, while a peripheral stalk is formed by the delta and b chains.

The protein resides in the cell membrane. It carries out the reaction ATP + H2O + 4 H(+)(in) = ADP + phosphate + 5 H(+)(out). Produces ATP from ADP in the presence of a proton gradient across the membrane. The alpha chain is a regulatory subunit. This Staphylococcus aureus (strain Mu3 / ATCC 700698) protein is ATP synthase subunit alpha.